The following is a 73-amino-acid chain: Large ribosomal subunit protein bL31 (73 aa).

Zn(2+) contacts are provided by cysteine 16, cysteine 18, cysteine 38, and cysteine 41.

This sequence belongs to the bacterial ribosomal protein bL31 family. Type A subfamily. Part of the 50S ribosomal subunit. Zn(2+) serves as cofactor.

Its function is as follows. Binds the 23S rRNA. The protein is Large ribosomal subunit protein bL31 of Vibrio parahaemolyticus serotype O3:K6 (strain RIMD 2210633).